The primary structure comprises 71 residues: MAFLKKSLFLVLFLGLVSLSMGEREKREEEEEEEEENKEEEANEEGKGESEEKRGLVGTLLGHIGKAILGG.

Residues 1 to 22 form the signal peptide; that stretch reads MAFLKKSLFLVLFLGLVSLSMG. A disordered region spans residues 21–56; it reads MGEREKREEEEEEEEENKEEEANEEGKGESEEKRGL. Positions 23 to 54 are excised as a propeptide; sequence EREKREEEEEEEEENKEEEANEEGKGESEEKR. Over residues 28–43 the composition is skewed to acidic residues; that stretch reads EEEEEEEEENKEEEAN. The segment covering 44–55 has biased composition (basic and acidic residues); the sequence is EEGKGESEEKRG. Residue Gly70 is modified to Glycine amide; in Frenatin 2.1S.

It belongs to the frog skin active peptide (FSAP) family. Frenatin subfamily. Post-translationally, frenatin 2.3S is not amidated. As to expression, expressed by the skin glands.

Its subcellular location is the secreted. Functionally, antimicrobial peptide with potent activity against Gram-negative bacteria. Shows immunostimulatory actions both in vitro and in vivo. In vitro, is cytotoxic to non-small cell lung adenocarcinoma A549 cells. Also, stimulates production of pro-inflammatory cytokines by mouse peritoneal macrophages and down-regulates production of the anti-inflammatory cytokine IL-10 by lipopolysaccharide (LPS)-stimulated cells. In vivo, intraperitoneal injection in mice enhances the activation state and homing capacity of Th1 type lymphocytes and promotes the recruitment, activation and tumoricidal capacities of peritoneal NK cells. Has a very weak activity in stimulation of insulin release and a weak hemolytic activity. Its function is as follows. Antimicrobial peptide with potent activity against some Gram-positive and Gram-negative bacteria. Has a multifunctional mode of action. It displays depolarization and bacterial cell leakage, and can also internalize into bacterial cells and alter specific gene expression involved in bacterial resistance mechanisms. Does not agglutinate bacteria and lipid vesicles, even a high concentrations. Also displays moderate cellular protection against yellow fever virus (YFV)-infected Vero cells without causing significant cytotoxicity. Shows a weak hemolytic activity, and is not cytotoxic to monocytes. Frenatin 2.3S (version without Gly-71) shows no or very weak antibacterial activity, shows no or very weak cytotoxicity to lung adenocarcinoma A549 cells and shows very weak hemolysis. It only stimulates production of pro-inflammatory cytokines IL-23 (but not IL-1beta and TNF-alpha) by mouse peritoneal macrophages and has no effect on the production of the anti-inflammatory cytokine IL-10. Frenatin 2.3S (version without Gly-71) very weakly stimulates insulin release. This Sphaenorhynchus lacteus (Orinoco lime treefrog) protein is Frenatin 2.3S.